A 230-amino-acid polypeptide reads, in one-letter code: Fibronectin type III domain-containing protein 4 (230 aa).

The N-terminal stretch at 1 to 40 (MPGCLPADSVGTMASLMPLSPYLSPTVLLLVSCDLGFVRA) is a signal peptide. Topologically, residues 41 to 163 (DRPPSPVNVT…GLDGERPLQT (123 aa)) are extracellular. The 94-residue stretch at 43–136 (PPSPVNVTVT…PRVHFRTLKG (94 aa)) folds into the Fibronectin type-III domain. N-linked (GlcNAc...) asparagine glycosylation is found at Asn48 and Asn143. The interval 118 to 156 (GLRGESPPGPRVHFRTLKGSDRLPSNSSSPGDITVEGLD) is disordered. A helical transmembrane segment spans residues 164 to 184 (GEVVIIVVVLLMWAAVIGLFC). Over 185 to 230 (RQYDIIKDNDSNNNPKEKGKGPEQSPQGRPVGTRQKKSPSINTIDV) the chain is Cytoplasmic. Residues 193-205 (NDSNNNPKEKGKG) show a composition bias toward basic and acidic residues. The segment at 193 to 230 (NDSNNNPKEKGKGPEQSPQGRPVGTRQKKSPSINTIDV) is disordered.

Its subcellular location is the membrane. It is found in the secreted. Functionally, has anti-inflammatory properties. In the colon, acts on macrophages to down-regulate inflammation. May suppress osteoclastogenesis and mature osteoclast resorptive function. In white adipose tissue, decreases local inflammation, via interaction with GPR116. Also required for proper systemic glucose tolerance, specifically sensitizing white adipocytes to insulin and promoting glucose uptake. The insulin sensitizing function in adipose tissue is mediated by interaction with ADGRF5/GPR116 and activation of cAMP signaling. This chain is Fibronectin type III domain-containing protein 4 (FNDC4), found in Bos taurus (Bovine).